A 193-amino-acid chain; its full sequence is METLWLVVGLGNPGPGYAATRHNVGQLVLDELASRDRLSFKTHKTNATVAEGRIVPGGPRFVLAKPNTYMNGSGGPVSQLLRFYSLEPSRLIVVQDELDIPFDTLRLKFGGGHGGHNGVRDVIAEVGSGDFTRVRVGVGRPPGVQAAADHVLKGFSAAERKNLPILVADAADAVERIAAEGLTAAQNRFHTAG.

Residue tyrosine 17 participates in tRNA binding. Histidine 22 serves as the catalytic Proton acceptor. TRNA contacts are provided by tyrosine 69, asparagine 71, and asparagine 117.

The protein belongs to the PTH family. In terms of assembly, monomer.

Its subcellular location is the cytoplasm. It catalyses the reaction an N-acyl-L-alpha-aminoacyl-tRNA + H2O = an N-acyl-L-amino acid + a tRNA + H(+). Hydrolyzes ribosome-free peptidyl-tRNAs (with 1 or more amino acids incorporated), which drop off the ribosome during protein synthesis, or as a result of ribosome stalling. Functionally, catalyzes the release of premature peptidyl moieties from peptidyl-tRNA molecules trapped in stalled 50S ribosomal subunits, and thus maintains levels of free tRNAs and 50S ribosomes. The chain is Peptidyl-tRNA hydrolase from Leifsonia xyli subsp. xyli (strain CTCB07).